Consider the following 188-residue polypeptide: Large ribosomal subunit protein bL32m (188 aa).

The Zn(2+) site is built by C110, C113, C123, and C126. The tract at residues 162–188 is disordered; it reads GETPSEHDQGKRIIERERKRPSWFTQN. The segment covering 165–181 has biased composition (basic and acidic residues); the sequence is PSEHDQGKRIIERERKR.

The protein belongs to the bacterial ribosomal protein bL32 family. In terms of assembly, component of the mitochondrial ribosome large subunit (39S) which comprises a 16S rRNA and about 50 distinct proteins. Post-translationally, MRPL32 precursor is processed by the m-AAA protease (composed of AFG3L2 and SPG7), which cleaves the N-terminal transit peptide. Cleavage by the m-AAA protease takes place prior to assembly into the large subunit, an essential step for mitochondrial ribosome (mitoribosome) assembly. Proper processing by the m-AAA protease is dependent on the zinc-binding region within the tightly folded C-terminal domain of MRPL32: zinc-dependent folding halts degradation initiated from the N-terminus and triggers the release of mature MRPL32.

The protein resides in the mitochondrion. Its function is as follows. Component of the mitochondrial large ribosomal subunit (mt-LSU). The mitochondrial ribosome (mitoribosome) is a large ribonucleoprotein complex responsible for the synthesis of proteins inside mitochondria. In Bos taurus (Bovine), this protein is Large ribosomal subunit protein bL32m (MRPL32).